A 292-amino-acid polypeptide reads, in one-letter code: E3 ubiquitin-protein ligase RNF144A (292 aa).

Residues 16-236 (PLVSCKLCLG…YDKGPCRNKL (221 aa)) form a TRIAD supradomain region. Zn(2+)-binding residues include cysteine 20, cysteine 23, cysteine 43, cysteine 46, cysteine 111, cysteine 116, cysteine 135, cysteine 138, cysteine 143, cysteine 146, histidine 151, cysteine 156, cysteine 185, and cysteine 188. The RING-type 1 zinc finger occupies 20-70 (CKLCLGEYPAEQMTTIAQCQCIFCTLCLKQYVELLIKEGLETAISCPDAAC). The IBR-type zinc-finger motif lies at 91–156 (QRYKKLQFER…KARWHPGQGC (66 aa)). The RING-type 2; atypical zinc finger occupies 185-214 (CPKCRVYIERDEGCAQMMCKNCKHAFCWYC). The active site involves cysteine 198. Cysteine 203, cysteine 206, cysteine 211, cysteine 214, histidine 226, and cysteine 232 together coordinate Zn(2+). A helical membrane pass occupies residues 250–270 (VVGIFAGFGLLLLVASPFLLL).

It belongs to the RBR family. RNF144 subfamily. In terms of assembly, self-associates. Interacts with UBE2L3. Post-translationally, autoubiquitinated.

The protein localises to the cell membrane. It is found in the cytoplasmic vesicle membrane. The catalysed reaction is [E2 ubiquitin-conjugating enzyme]-S-ubiquitinyl-L-cysteine + [acceptor protein]-L-lysine = [E2 ubiquitin-conjugating enzyme]-L-cysteine + [acceptor protein]-N(6)-ubiquitinyl-L-lysine.. The protein operates within protein modification; protein ubiquitination. Functionally, E3 ubiquitin-protein ligase which accepts ubiquitin from E2 ubiquitin-conjugating enzymes UBE2L3 and UBE2L6 in the form of a thioester and then directly transfers the ubiquitin to targeted substrates. Mediates the ubiquitination and degradation of the DNA damage kinase PRKDC during DNA damage. Positively regulates DNA virus or exogenous cytosolic DNA-triggered innate immune response by mediating STING1 ubiquitination and increasing its 'Lys-6'-linked ubiquitination and translocation from the endoplasmic reticulum to the Golgi leading to downstream signaling pathways. Plays a positive role in EGF-dependent cell proliferation by prolonging EGF/EGFR signaling during EGF stimulation through EGFR ubiquitination. Increases ERK activity independently of EGFR signaling by promoting polyubiquitination and subsequent degradation of VRK3 in the cytosol. The sequence is that of E3 ubiquitin-protein ligase RNF144A (Rnf144a) from Mus musculus (Mouse).